A 301-amino-acid chain; its full sequence is Thymidylate synthase (301 aa).

DUMP contacts are provided by residues R38 and 163–164 (RR). Catalysis depends on C183, which acts as the Nucleophile. DUMP-binding positions include 203 to 206 (RSGD), N214, and 244 to 246 (HIY). D206 contributes to the (6R)-5,10-methylene-5,6,7,8-tetrahydrofolate binding site. Position 300 (A300) interacts with (6R)-5,10-methylene-5,6,7,8-tetrahydrofolate.

The protein belongs to the thymidylate synthase family. Homodimer.

It catalyses the reaction dUMP + (6R)-5,10-methylene-5,6,7,8-tetrahydrofolate = 7,8-dihydrofolate + dTMP. It participates in pyrimidine metabolism; dTTP biosynthesis. Functionally, catalyzes the reductive methylation of deoxyuridylate to thymidylate. This is Thymidylate synthase from Varicella-zoster virus (strain Dumas) (HHV-3).